A 198-amino-acid chain; its full sequence is Molybdenum cofactor guanylyltransferase (198 aa).

GTP contacts are provided by residues 14-16 (LAG), lysine 27, aspartate 73, and aspartate 103. Residue aspartate 103 coordinates Mg(2+).

Belongs to the MobA family. As to quaternary structure, monomer. Mg(2+) is required as a cofactor.

Its subcellular location is the cytoplasm. The catalysed reaction is Mo-molybdopterin + GTP + H(+) = Mo-molybdopterin guanine dinucleotide + diphosphate. Functionally, transfers a GMP moiety from GTP to Mo-molybdopterin (Mo-MPT) cofactor (Moco or molybdenum cofactor) to form Mo-molybdopterin guanine dinucleotide (Mo-MGD) cofactor. This is Molybdenum cofactor guanylyltransferase from Pseudomonas aeruginosa (strain ATCC 15692 / DSM 22644 / CIP 104116 / JCM 14847 / LMG 12228 / 1C / PRS 101 / PAO1).